The sequence spans 451 residues: UDP-N-acetylmuramoylalanine--D-glutamate ligase (451 aa).

120-126 is an ATP binding site; it reads GSNGKTT.

It belongs to the MurCDEF family.

Its subcellular location is the cytoplasm. It catalyses the reaction UDP-N-acetyl-alpha-D-muramoyl-L-alanine + D-glutamate + ATP = UDP-N-acetyl-alpha-D-muramoyl-L-alanyl-D-glutamate + ADP + phosphate + H(+). Its pathway is cell wall biogenesis; peptidoglycan biosynthesis. Its function is as follows. Cell wall formation. Catalyzes the addition of glutamate to the nucleotide precursor UDP-N-acetylmuramoyl-L-alanine (UMA). The protein is UDP-N-acetylmuramoylalanine--D-glutamate ligase (murD) of Bacillus subtilis (strain 168).